The primary structure comprises 209 residues: Imidazole glycerol phosphate synthase subunit HisH (209 aa).

Residues 3 to 209 (SVAVIDYGMG…ANFLTWNGVS (207 aa)) form the Glutamine amidotransferase type-1 domain. Residue Cys82 is the Nucleophile of the active site. Catalysis depends on residues His187 and Glu189.

Heterodimer of HisH and HisF.

The protein resides in the cytoplasm. It catalyses the reaction 5-[(5-phospho-1-deoxy-D-ribulos-1-ylimino)methylamino]-1-(5-phospho-beta-D-ribosyl)imidazole-4-carboxamide + L-glutamine = D-erythro-1-(imidazol-4-yl)glycerol 3-phosphate + 5-amino-1-(5-phospho-beta-D-ribosyl)imidazole-4-carboxamide + L-glutamate + H(+). It carries out the reaction L-glutamine + H2O = L-glutamate + NH4(+). It functions in the pathway amino-acid biosynthesis; L-histidine biosynthesis; L-histidine from 5-phospho-alpha-D-ribose 1-diphosphate: step 5/9. Its function is as follows. IGPS catalyzes the conversion of PRFAR and glutamine to IGP, AICAR and glutamate. The HisH subunit catalyzes the hydrolysis of glutamine to glutamate and ammonia as part of the synthesis of IGP and AICAR. The resulting ammonia molecule is channeled to the active site of HisF. The protein is Imidazole glycerol phosphate synthase subunit HisH of Nitrosococcus oceani (strain ATCC 19707 / BCRC 17464 / JCM 30415 / NCIMB 11848 / C-107).